The primary structure comprises 1134 residues: RNA-binding protein NAB6 (1134 aa).

Residue Ser-2 is modified to N-acetylserine. Disordered regions lie at residues 112-133 (RPVS…NTNN), 151-173 (RNNN…RNNS), and 464-491 (SVPS…SGIT). Low complexity-rich tracts occupy residues 115-133 (SNHN…NTNN) and 151-164 (RNNN…HNNN). Residues Ser-464 and Ser-467 each carry the phosphoserine modification. The segment covering 471-489 (GNNNDSNNNGNNNKSNMSG) has biased composition (low complexity). The region spanning 653–726 (RTIYIGNINP…NMLRVGWGHY (74 aa)) is the RRM domain. Disordered regions lie at residues 918–959 (LDAH…FGGL) and 1043–1092 (NYRS…GSFA). Polar residues predominate over residues 1057–1081 (STLSYNHSKNNETPMQDIFTNGETA). The span at 1083–1092 (NRKKKRGSFA) shows a compositional bias: basic residues.

It localises to the cytoplasm. Functionally, RNA-binding protein that associates with mRNAs encoding cell wall proteins. The chain is RNA-binding protein NAB6 (NAB6) from Saccharomyces cerevisiae (strain ATCC 204508 / S288c) (Baker's yeast).